The primary structure comprises 363 residues: MKLSLLSTFAAVIIGALALPQGPGGGGSVTCPGGQSTSNSQCCVWFDVLDDLQTNFYQGSKCESPVRKILRIVFHDAIGFSPALTAAGQFGGGGADGSIIAHSNIELAFPANGGLTDTIEALRAVGINHGVSFGDLIQFATAVGMSNCPGSPRLEFLTGRSNSSQPSPPSLIPGPGNIVTAILDRMGDAGFSPDEVVDLLAAHSLASQEGLNSAIFRSPLDSTPQVFDTQFYIETLLKGTTQPGPSLGFAEELSPFPGEFRMRSDALLARDSRTACRWQSMTSSNEVMGQRYRAAMAKMSVLGFDRNALTDCSDVIPSAVSNNAAPVIPGGLTVDDIEVSCPSEPFPEIATASGPLPSLAPAP.

The first 20 residues, 1–20, serve as a signal peptide directing secretion; it reads MKLSLLSTFAAVIIGALALP. Gln21 is subject to Pyrrolidone carboxylic acid. 4 cysteine pairs are disulfide-bonded: Cys31/Cys43, Cys42/Cys312, Cys62/Cys148, and Cys276/Cys341. The active-site Proton acceptor is His75. Residues Asp76, Gly94, Asp96, and Ser98 each contribute to the Ca(2+) site. Asn162 carries an N-linked (GlcNAc...) (high mannose) asparagine glycan. Residue His203 coordinates heme b. 5 residues coordinate Ca(2+): Ser204, Asp221, Thr223, Val226, and Asp228. O-linked (Man...) serine glycosylation is present at Ser358.

Belongs to the peroxidase family. Ligninase subfamily. It depends on Ca(2+) as a cofactor. The cofactor is heme b.

Its subcellular location is the secreted. It catalyses the reaction 2 a phenolic donor + H2O2 = 2 a phenolic radical donor + 2 H2O. The protein is Peroxidase (CIP1) of Coprinopsis cinerea (strain Okayama-7 / 130 / ATCC MYA-4618 / FGSC 9003) (Inky cap fungus).